The sequence spans 455 residues: Venom prothrombin activator notecarin-D1 (455 aa).

An N-terminal signal peptide occupies residues 1-20; sequence MAPQLLLCLILTFLWSLPEA. Positions 21–40 are excised as a propeptide; sequence ESNVFLKSKVANRFLQRTKR. Residues 41–86 form the Gla domain; the sequence is SNSLFEEIRPGNIERECIEEKCSKEEAREVFEDNEKTETFWNVYVD. A 4-carboxyglutamate mark is found at Glu-46, Glu-47, Glu-54, Glu-56, Glu-59, Glu-60, Glu-65, Glu-66, Glu-69, Glu-72, and Glu-75. Cys-57 and Cys-62 are disulfide-bonded. Positions 86-122 constitute an EGF-like 1; calcium-binding domain; that stretch reads DGDQCSSNPCHYRGTCKDGIGSYTCTCLPNYEGKNCE. 11 disulfide bridges follow: Cys-90-Cys-101, Cys-95-Cys-110, Cys-112-Cys-121, Cys-129-Cys-140, Cys-136-Cys-149, Cys-151-Cys-164, Cys-172-Cys-328, Cys-216-Cys-221, Cys-236-Cys-252, Cys-376-Cys-390, and Cys-401-Cys-429. O-linked (Hex...) serine glycosylation occurs at Ser-92. The EGF-like 2 domain maps to 129–164; sequence CRVDNGNCWHFCKRVQSETQCSCAESYRLGVDGHSC. A propeptide spans 182-209 (activation peptide); sequence REASLPDFVQSQKATLLKKSDNPSPDIR. The 244-residue stretch at 210-453 folds into the Peptidase S1 domain; that stretch reads IVNGMDCKLG…FIPWIKKIMS (244 aa). Catalysis depends on His-251, which acts as the Charge relay system. Asn-254 carries N-linked (GlcNAc...) asparagine glycosylation. Asp-308 serves as the catalytic Charge relay system. The active-site Charge relay system is Ser-405.

It belongs to the peptidase S1 family. Snake venom subfamily. In terms of assembly, heterodimer of a light chain and a heavy chain; disulfide-linked. Post-translationally, gamma-carboxyglutamate residues are formed by vitamin K dependent carboxylation. These residues are essential for the binding of calcium. As to expression, expressed by the venom gland.

Its subcellular location is the secreted. The enzyme catalyses Selective cleavage of Arg-|-Thr and then Arg-|-Ile bonds in prothrombin to form thrombin.. Functionally, snake prothrombin activator that attacks the hemostatic system of prey. This protein is functionally similar to blood coagulation factor Xa. The chain is Venom prothrombin activator notecarin-D1 from Notechis scutatus scutatus (Mainland tiger snake).